We begin with the raw amino-acid sequence, 180 residues long: Probable DNA-directed RNA polymerase subunit delta (180 aa).

Positions 14–81 (LSMIEVARAI…GHNVWALRSW (68 aa)) constitute an HTH HARE-type domain. Residues 89 to 180 (EEVNHPEDEE…HQDDLDDDDE (92 aa)) are disordered. Residues 115 to 163 (DSDDDDIIDYDSDDPEDEDLDVDEEDTNEDDYSDDDLDDADDNELDDGI) show a composition bias toward acidic residues.

Belongs to the RpoE family. RNAP is composed of a core of 2 alpha, a beta and a beta' subunits. The core is associated with a delta subunit and one of several sigma factors.

Its function is as follows. Participates in both the initiation and recycling phases of transcription. In the presence of the delta subunit, RNAP displays an increased specificity of transcription, a decreased affinity for nucleic acids, and an increased efficiency of RNA synthesis because of enhanced recycling. This chain is Probable DNA-directed RNA polymerase subunit delta, found in Lactobacillus johnsonii (strain CNCM I-12250 / La1 / NCC 533).